The primary structure comprises 402 residues: Eukaryotic initiation factor 4A (402 aa).

Positions E29–K57 match the Q motif motif. The Helicase ATP-binding domain maps to I60–I230. Residue A73 to T80 participates in ATP binding. Residues D178 to D181 carry the DEAD box motif. Residues G241–I402 enclose the Helicase C-terminal domain.

It belongs to the DEAD box helicase family. eIF4A subfamily. In terms of assembly, eIF4F is a multi-subunit complex, the composition of which varies with external and internal environmental conditions. It is composed of at least EIF4A, EIF4E and EIF4G.

It carries out the reaction ATP + H2O = ADP + phosphate + H(+). ATP-dependent RNA helicase which is a subunit of the eIF4F complex involved in cap recognition and is required for mRNA binding to ribosome. In the current model of translation initiation, eIF4A unwinds RNA secondary structures in the 5'-UTR of mRNAs which is necessary to allow efficient binding of the small ribosomal subunit, and subsequent scanning for the initiator codon. In Caenorhabditis elegans, this protein is Eukaryotic initiation factor 4A (inf-1).